We begin with the raw amino-acid sequence, 457 residues long: uncharacterized protein (457 aa).

In terms of domain architecture, TRAM spans 10-69; the sequence is ALLQGQTVTVPITALAAGGDGIARLTDGRVLFVAGAVPGDTVEARLVHLKKDHGFGKILQ. The [4Fe-4S] cluster site is built by C82, C88, C91, and C170. S-adenosyl-L-methionine-binding residues include Q294, Y323, E344, and D387. C414 serves as the catalytic Nucleophile.

The protein belongs to the class I-like SAM-binding methyltransferase superfamily. RNA M5U methyltransferase family.

This is an uncharacterized protein from Gloeobacter violaceus (strain ATCC 29082 / PCC 7421).